Here is a 420-residue protein sequence, read N- to C-terminus: Putative kinase Y4mE (420 aa).

Asp-302 serves as the catalytic Proton acceptor.

The protein belongs to the HipA Ser/Thr kinase family.

The protein is Putative kinase Y4mE of Sinorhizobium fredii (strain NBRC 101917 / NGR234).